A 417-amino-acid polypeptide reads, in one-letter code: Gamma-glutamyl phosphate reductase (417 aa).

This sequence belongs to the gamma-glutamyl phosphate reductase family.

It is found in the cytoplasm. It carries out the reaction L-glutamate 5-semialdehyde + phosphate + NADP(+) = L-glutamyl 5-phosphate + NADPH + H(+). It functions in the pathway amino-acid biosynthesis; L-proline biosynthesis; L-glutamate 5-semialdehyde from L-glutamate: step 2/2. Functionally, catalyzes the NADPH-dependent reduction of L-glutamate 5-phosphate into L-glutamate 5-semialdehyde and phosphate. The product spontaneously undergoes cyclization to form 1-pyrroline-5-carboxylate. The protein is Gamma-glutamyl phosphate reductase of Streptococcus agalactiae serotype III (strain NEM316).